The following is a 421-amino-acid chain: 3-isopropylmalate dehydratase large subunit (421 aa).

The [4Fe-4S] cluster site is built by Cys301, Cys361, and Cys364.

The protein belongs to the aconitase/IPM isomerase family. LeuC type 2 subfamily. Heterodimer of LeuC and LeuD. [4Fe-4S] cluster serves as cofactor.

The catalysed reaction is (2R,3S)-3-isopropylmalate = (2S)-2-isopropylmalate. Its pathway is amino-acid biosynthesis; L-leucine biosynthesis; L-leucine from 3-methyl-2-oxobutanoate: step 2/4. Catalyzes the isomerization between 2-isopropylmalate and 3-isopropylmalate, via the formation of 2-isopropylmaleate. This Desulfitobacterium hafniense (strain Y51) protein is 3-isopropylmalate dehydratase large subunit.